Consider the following 205-residue polypeptide: GTP cyclohydrolase-2 (205 aa).

49 to 53 is a binding site for GTP; that stretch reads RLHSE. The Zn(2+) site is built by Cys54, Cys65, and Cys67. Residues Gln70, 92–94, and Thr114 each bind GTP; that span reads EGR. Residue Asp126 is the Proton acceptor of the active site. The Nucleophile role is filled by Arg128. Residues Thr149 and Lys154 each coordinate GTP.

This sequence belongs to the GTP cyclohydrolase II family. The cofactor is Zn(2+).

The catalysed reaction is GTP + 4 H2O = 2,5-diamino-6-hydroxy-4-(5-phosphoribosylamino)-pyrimidine + formate + 2 phosphate + 3 H(+). The protein operates within cofactor biosynthesis; riboflavin biosynthesis; 5-amino-6-(D-ribitylamino)uracil from GTP: step 1/4. Functionally, catalyzes the conversion of GTP to 2,5-diamino-6-ribosylamino-4(3H)-pyrimidinone 5'-phosphate (DARP), formate and pyrophosphate. The protein is GTP cyclohydrolase-2 of Pseudomonas paraeruginosa (strain DSM 24068 / PA7) (Pseudomonas aeruginosa (strain PA7)).